The primary structure comprises 123 residues: Small ribosomal subunit protein eS8 (123 aa).

The interval 1 to 38 (MKDQGRSPRKRTGGRRRPNHKKKKHELGKDTVETQVGE) is disordered. Residues 7 to 26 (SPRKRTGGRRRPNHKKKKHE) are compositionally biased toward basic residues.

Part of the 30S ribosomal subunit.

The polypeptide is Small ribosomal subunit protein eS8 (rps8e) (Haloarcula marismortui (strain ATCC 43049 / DSM 3752 / JCM 8966 / VKM B-1809) (Halobacterium marismortui)).